The following is a 618-amino-acid chain: Mitochondrial Rho GTPase 2 (618 aa).

Residues 1-592 are Cytoplasmic-facing; sequence MRRDVRILLL…ELHPSSFWLR (592 aa). Positions 2–168 constitute a Miro 1 domain; sequence RRDVRILLLG…FYYAQKAVLH (167 aa). Residues Gly16, Lys17, Thr18, and Ser19 each coordinate GTP. Mg(2+) is bound at residue Thr18. Mg(2+) contacts are provided by Pro35 and Asp57. Residue Ser59 coordinates GTP. Lys96 is covalently cross-linked (Glycyl lysine isopeptide (Lys-Gly) (interchain with G-Cter in ubiquitin)). GTP contacts are provided by Asn118, Lys119, Asp121, Ala149, and Lys150. Residue Lys119 forms a Glycyl lysine isopeptide (Lys-Gly) (interchain with G-Cter in ubiquitin) linkage. Residue Lys164 forms a Glycyl lysine isopeptide (Lys-Gly) (interchain with G-Cter in ubiquitin) linkage. 2 EF-hand domains span residues 184–219 and 304–339; these read ACAQ…CFGH and LGYQ…FPAA. Ca(2+) contacts are provided by Asp197, Asp199, Asp201, Glu208, Asp317, Asp319, Asp321, and Glu328. One can recognise a Miro 2 domain in the interval 414-576; sequence RSVLLCKVVG…FTQLATMAAF (163 aa). Positions 426, 428, 429, 430, and 431 each coordinate GTP. The GDP site is built by Gly426, Gly428, Lys429, Ser430, and Ala431. Residue Ser430 coordinates Mg(2+). Glu471 lines the Mg(2+) pocket. Residues Lys525, Asp527, and Cys556 each coordinate GTP. 3 residues coordinate GDP: Lys525, Asp527, and Cys556. A helical; Anchor for type IV membrane protein transmembrane segment spans residues 593–615; sequence GLLGVVGAAVAAVLSFSLYRVLV. Topologically, residues 616–618 are mitochondrial intermembrane; the sequence is KSQ.

It belongs to the mitochondrial Rho GTPase family. As to quaternary structure, homodimer. Interacts with the kinesin-binding proteins TRAK1/OIP106 and TRAK2/GRIF1, forming a link between mitochondria and the trafficking apparatus of the microtubules. Interacts with ARMCX3. Found in a complex with KIF5B, OGT, RHOT1 and TRAK1. In terms of processing, ubiquitinated by PRKN in a PINK1-dependent manner, leading to its degradation. Ubiquitously expressed. Highly expressed in heart, liver, skeletal muscle, kidney and pancreas.

Its subcellular location is the mitochondrion outer membrane. It catalyses the reaction GTP + H2O = GDP + phosphate + H(+). The catalysed reaction is ATP + H2O = ADP + phosphate + H(+). It carries out the reaction UTP + H2O = UDP + phosphate + H(+). Atypical mitochondrial nucleoside-triphosphatase (NTPase) involved in mitochondrial trafficking. Probably involved in control of anterograde transport of mitochondria and their subcellular distribution. Can hydrolyze GTP. Can hydrolyze ATP and UTP. This Homo sapiens (Human) protein is Mitochondrial Rho GTPase 2 (RHOT2).